A 251-amino-acid polypeptide reads, in one-letter code: Imidazole glycerol phosphate synthase subunit HisF (251 aa).

Active-site residues include Asp-11 and Asp-130.

This sequence belongs to the HisA/HisF family. In terms of assembly, heterodimer of HisH and HisF.

The protein resides in the cytoplasm. The catalysed reaction is 5-[(5-phospho-1-deoxy-D-ribulos-1-ylimino)methylamino]-1-(5-phospho-beta-D-ribosyl)imidazole-4-carboxamide + L-glutamine = D-erythro-1-(imidazol-4-yl)glycerol 3-phosphate + 5-amino-1-(5-phospho-beta-D-ribosyl)imidazole-4-carboxamide + L-glutamate + H(+). Its pathway is amino-acid biosynthesis; L-histidine biosynthesis; L-histidine from 5-phospho-alpha-D-ribose 1-diphosphate: step 5/9. In terms of biological role, IGPS catalyzes the conversion of PRFAR and glutamine to IGP, AICAR and glutamate. The HisF subunit catalyzes the cyclization activity that produces IGP and AICAR from PRFAR using the ammonia provided by the HisH subunit. The sequence is that of Imidazole glycerol phosphate synthase subunit HisF from Chlorobium phaeovibrioides (strain DSM 265 / 1930) (Prosthecochloris vibrioformis (strain DSM 265)).